The sequence spans 120 residues: ATP-dependent Clp protease adapter protein ClpS (120 aa).

Positions Met-1 to Gly-25 are disordered.

This sequence belongs to the ClpS family. Binds to the N-terminal domain of the chaperone ClpA.

In terms of biological role, involved in the modulation of the specificity of the ClpAP-mediated ATP-dependent protein degradation. This Pseudomonas putida (strain W619) protein is ATP-dependent Clp protease adapter protein ClpS.